Here is a 664-residue protein sequence, read N- to C-terminus: Sorbicillinoid biosynthetic cluster transcription factor sor3 (664 aa).

Residues 40 to 67 constitute a DNA-binding region (zn(2)-C6 fungal-type); the sequence is CQSCRASKVKCDGGRPVCARCQKRGRAC. The tract at residues 68-102 is disordered; it reads SYSQHDAASPRGRGRQRAKAPTRQPRPIRSRASVE.

It localises to the nucleus. Its function is as follows. Transcription factor that acts in concert with sor4 which is a transcriptional activator of the gene cluster that mediates the biosynthesis of sorbicillinoids, a diverse group of yellow secondary metabolites that restrict growth of competing pathogenic fungi but not of bacteria. Regulates the cluster genes in a light dependent manner. Also plays a direct or indirect role in regulation of paracelsin biosynthesis and cellulase gene expression. This chain is Sorbicillinoid biosynthetic cluster transcription factor sor3, found in Hypocrea jecorina (strain QM6a) (Trichoderma reesei).